A 139-amino-acid chain; its full sequence is Small ribosomal subunit protein uS11 (139 aa).

This sequence belongs to the universal ribosomal protein uS11 family. In terms of assembly, part of the 30S ribosomal subunit.

Its function is as follows. Located on the platform of the 30S subunit. The polypeptide is Small ribosomal subunit protein uS11 (Pyrobaculum islandicum (strain DSM 4184 / JCM 9189 / GEO3)).